The sequence spans 320 residues: o-succinylbenzoate synthase (320 aa).

Catalysis depends on Lys133, which acts as the Proton donor. Positions 161, 190, and 213 each coordinate Mg(2+). Lys235 acts as the Proton acceptor in catalysis.

This sequence belongs to the mandelate racemase/muconate lactonizing enzyme family. MenC type 1 subfamily. It depends on a divalent metal cation as a cofactor.

It carries out the reaction (1R,6R)-6-hydroxy-2-succinyl-cyclohexa-2,4-diene-1-carboxylate = 2-succinylbenzoate + H2O. It functions in the pathway quinol/quinone metabolism; 1,4-dihydroxy-2-naphthoate biosynthesis; 1,4-dihydroxy-2-naphthoate from chorismate: step 4/7. Its pathway is quinol/quinone metabolism; menaquinone biosynthesis. Its function is as follows. Converts 2-succinyl-6-hydroxy-2,4-cyclohexadiene-1-carboxylate (SHCHC) to 2-succinylbenzoate (OSB). The protein is o-succinylbenzoate synthase of Shigella boydii serotype 18 (strain CDC 3083-94 / BS512).